Here is a 144-residue protein sequence, read N- to C-terminus: Angiogenin-4 (144 aa).

Residues 1–24 (MTMSPCPLLLVFVLGLVVIPPTLA) form the signal peptide. The Proton acceptor role is filled by His-36. 3 disulfides stabilise this stretch: Cys-49-Cys-103, Cys-62-Cys-114, and Cys-80-Cys-129. The Nucleolar localization signal signature appears at 54–58 (KERKL). The active-site Proton donor is the His-136.

It belongs to the pancreatic ribonuclease family. As to expression, detected in small intestine, caecum and colon, with the highest expression in Paneth cells in the intestinal epithelium.

Its subcellular location is the secreted. It localises to the cytoplasmic vesicle. The protein resides in the secretory vesicle lumen. It is found in the nucleus. The protein localises to the nucleolus. Functionally, has bactericidal activity against E.faecalis and L.monocytogenes, but not against L.innocua and E.coli. Promotes angiogenesis (in vitro). Has low ribonuclease activity (in vitro). Promotes proliferation of melanoma cells, but not of endothelial cells or fibroblasts (in vitro). This Mus musculus (Mouse) protein is Angiogenin-4 (Ang4).